The sequence spans 127 residues: uncharacterized protein (127 aa).

A run of 3 helical transmembrane segments spans residues 16-36 (AVIG…CYVI), 59-79 (LVGA…SFLF), and 100-120 (IIGF…GGVI).

The protein localises to the cell membrane. This is an uncharacterized protein from Methanocaldococcus jannaschii (strain ATCC 43067 / DSM 2661 / JAL-1 / JCM 10045 / NBRC 100440) (Methanococcus jannaschii).